Reading from the N-terminus, the 359-residue chain is Nicotinate N-methyltransferase 1 (359 aa).

Asp-226 is a binding site for S-adenosyl-L-methionine.

Belongs to the class I-like SAM-binding methyltransferase superfamily. Cation-independent O-methyltransferase family. As to expression, highly expressed in anthers, pistils, developing siliques, and developing seeds.

It localises to the cytoplasm. The protein resides in the cytosol. The catalysed reaction is nicotinate + S-adenosyl-L-methionine = N-methylnicotinate + S-adenosyl-L-homocysteine. Involved in nicotinate detoxification in planta. Catalyzes the conversion of nicotinate to N-methylnicotinate, which is a detoxified form of endogenous nicotinate in planta. In Arabidopsis thaliana (Mouse-ear cress), this protein is Nicotinate N-methyltransferase 1.